A 362-amino-acid chain; its full sequence is tRNA/tmRNA (uracil-C(5))-methyltransferase (362 aa).

Glutamine 182, tyrosine 210, asparagine 215, glutamate 231, and aspartate 293 together coordinate S-adenosyl-L-methionine. The Nucleophile role is filled by cysteine 318. Glutamate 352 functions as the Proton acceptor in the catalytic mechanism.

It belongs to the class I-like SAM-binding methyltransferase superfamily. RNA M5U methyltransferase family. TrmA subfamily.

The catalysed reaction is uridine(54) in tRNA + S-adenosyl-L-methionine = 5-methyluridine(54) in tRNA + S-adenosyl-L-homocysteine + H(+). The enzyme catalyses uridine(341) in tmRNA + S-adenosyl-L-methionine = 5-methyluridine(341) in tmRNA + S-adenosyl-L-homocysteine + H(+). Dual-specificity methyltransferase that catalyzes the formation of 5-methyluridine at position 54 (m5U54) in all tRNAs, and that of position 341 (m5U341) in tmRNA (transfer-mRNA). This is tRNA/tmRNA (uracil-C(5))-methyltransferase from Neisseria gonorrhoeae (strain ATCC 700825 / FA 1090).